A 90-amino-acid chain; its full sequence is Small ribosomal subunit protein bS20 (90 aa).

It belongs to the bacterial ribosomal protein bS20 family.

In terms of biological role, binds directly to 16S ribosomal RNA. The sequence is that of Small ribosomal subunit protein bS20 from Mesomycoplasma hyopneumoniae (strain 232) (Mycoplasma hyopneumoniae).